A 185-amino-acid chain; its full sequence is Signal peptidase complex subunit 3 (185 aa).

Over 1–12 the chain is Cytoplasmic; that stretch reads MIVDTFTNRGST. A helical; Signal-anchor for type II membrane protein membrane pass occupies residues 13 to 34; that stretch reads FFSKLSTVLFFLCAVITFQGVI. The Lumenal portion of the chain corresponds to 35 to 185; it reads QRREVELDTP…PFHKIITQPK (151 aa). N-linked (GlcNAc...) asparagine glycosylation occurs at Asn148.

The protein belongs to the SPCS3 family. As to quaternary structure, component of the signal peptidase complex (SPC) composed of a catalytic subunit sec11 and three accessory subunits spc1, spc2 and spc3. The complex induces a local thinning of the ER membrane which is used to measure the length of the signal peptide (SP) h-region of protein substrates. This ensures the selectivity of the complex towards h-regions shorter than 18-20 amino acids. SPC associates with the translocon complex.

The protein localises to the endoplasmic reticulum membrane. Essential component of the signal peptidase complex (SPC) which catalyzes the cleavage of N-terminal signal sequences from nascent proteins as they are translocated into the lumen of the endoplasmic reticulum. Essential for the SPC catalytic activity, possibly by stabilizing and positioning the active center of the complex close to the lumenal surface. Essential for viability. The protein is Signal peptidase complex subunit 3 (spc3) of Schizosaccharomyces pombe (strain 972 / ATCC 24843) (Fission yeast).